The chain runs to 101 residues: YcgL domain-containing protein ABBFA_001807 (101 aa).

The YcgL domain maps to 1–92 (MHCDIYRSSK…PPEGLINPNA (92 aa)).

This is YcgL domain-containing protein ABBFA_001807 from Acinetobacter baumannii (strain AB307-0294).